The following is a 666-amino-acid chain: DNA mismatch repair protein MutL (666 aa).

Belongs to the DNA mismatch repair MutL/HexB family.

Its function is as follows. This protein is involved in the repair of mismatches in DNA. It is required for dam-dependent methyl-directed DNA mismatch repair. May act as a 'molecular matchmaker', a protein that promotes the formation of a stable complex between two or more DNA-binding proteins in an ATP-dependent manner without itself being part of a final effector complex. The sequence is that of DNA mismatch repair protein MutL from Clostridium botulinum (strain 657 / Type Ba4).